The primary structure comprises 317 residues: MPDSRPDTELSNPQSAKAPLDPHLKALENESIHIFREVAAEFERPVMLYSIGKDSSVLLHLARKAFYPGRVPFPLLHVNTGWKFREMIAFRDETARKYDLDLIEHINPRGAAENITPFTHGSAAFTDIMKTESLRQALDAGQFDAAFGGARRDEEASRAKERIYSFRTPDHRWDPRNQRPELWNIYNGMIRKGESVRAFPLSNWTEVDIWRYIQAEDIPLVPLYYAKKRKFVERDGMMILAEDPRLELLPGEVRQEGMIRFRTLGDFPLTGAIRSQATTLEEVIAELEIATVSERQGRAIDRDQSGSMEKKKREGYF.

Disordered regions lie at residues Met1–Asp21 and Arg298–Phe317.

The protein belongs to the PAPS reductase family. CysD subfamily. Heterodimer composed of CysD, the smaller subunit, and CysN.

It carries out the reaction sulfate + ATP + H(+) = adenosine 5'-phosphosulfate + diphosphate. It participates in sulfur metabolism; hydrogen sulfide biosynthesis; sulfite from sulfate: step 1/3. In terms of biological role, with CysN forms the ATP sulfurylase (ATPS) that catalyzes the adenylation of sulfate producing adenosine 5'-phosphosulfate (APS) and diphosphate, the first enzymatic step in sulfur assimilation pathway. APS synthesis involves the formation of a high-energy phosphoric-sulfuric acid anhydride bond driven by GTP hydrolysis by CysN coupled to ATP hydrolysis by CysD. The sequence is that of Sulfate adenylyltransferase subunit 2 from Rhizobium etli (strain ATCC 51251 / DSM 11541 / JCM 21823 / NBRC 15573 / CFN 42).